Reading from the N-terminus, the 364-residue chain is N-acetyl-gamma-glutamyl-phosphate reductase (364 aa).

Cys157 is a catalytic residue.

It belongs to the NAGSA dehydrogenase family. Type 1 subfamily.

The protein resides in the cytoplasm. It catalyses the reaction N-acetyl-L-glutamate 5-semialdehyde + phosphate + NADP(+) = N-acetyl-L-glutamyl 5-phosphate + NADPH + H(+). It participates in amino-acid biosynthesis; L-arginine biosynthesis; N(2)-acetyl-L-ornithine from L-glutamate: step 3/4. In terms of biological role, catalyzes the NADPH-dependent reduction of N-acetyl-5-glutamyl phosphate to yield N-acetyl-L-glutamate 5-semialdehyde. The sequence is that of N-acetyl-gamma-glutamyl-phosphate reductase from Bifidobacterium longum (strain NCC 2705).